Here is a 437-residue protein sequence, read N- to C-terminus: Phosphomethylpyrimidine synthase (437 aa).

Residues Asn69, Met98, Tyr127, His163, 185–187, 226–229, and Glu265 contribute to the substrate site; these read SRG and DACR. His269 is a Zn(2+) binding site. Residue Tyr292 participates in substrate binding. His333 serves as a coordination point for Zn(2+). 3 residues coordinate [4Fe-4S] cluster: Cys409, Cys412, and Cys416.

Belongs to the ThiC family. It depends on [4Fe-4S] cluster as a cofactor.

The enzyme catalyses 5-amino-1-(5-phospho-beta-D-ribosyl)imidazole + S-adenosyl-L-methionine = 4-amino-2-methyl-5-(phosphooxymethyl)pyrimidine + CO + 5'-deoxyadenosine + formate + L-methionine + 3 H(+). The protein operates within cofactor biosynthesis; thiamine diphosphate biosynthesis. Catalyzes the synthesis of the hydroxymethylpyrimidine phosphate (HMP-P) moiety of thiamine from aminoimidazole ribotide (AIR) in a radical S-adenosyl-L-methionine (SAM)-dependent reaction. In Alkaliphilus metalliredigens (strain QYMF), this protein is Phosphomethylpyrimidine synthase.